A 182-amino-acid polypeptide reads, in one-letter code: Lipoprotein signal peptidase (182 aa).

3 helical membrane passes run 12–32, 68–88, and 91–111; these read VAVF…TKAW, ATWV…VAGV, and VSMK…GNLI. Residues Asp127 and Asp140 contribute to the active site. The helical transmembrane segment at 135-155 threads the bilayer; that stretch reads VGNVADIYLVVAGVVLVILIL.

Belongs to the peptidase A8 family.

It localises to the cell membrane. It catalyses the reaction Release of signal peptides from bacterial membrane prolipoproteins. Hydrolyzes -Xaa-Yaa-Zaa-|-(S,diacylglyceryl)Cys-, in which Xaa is hydrophobic (preferably Leu), and Yaa (Ala or Ser) and Zaa (Gly or Ala) have small, neutral side chains.. Its pathway is protein modification; lipoprotein biosynthesis (signal peptide cleavage). Functionally, this protein specifically catalyzes the removal of signal peptides from prolipoproteins. The sequence is that of Lipoprotein signal peptidase from Bifidobacterium longum (strain DJO10A).